The following is a 156-amino-acid chain: MALEKSLALLPLLVLVLLVLGWVQPSLGKESRAKKFQRQHMDSDGSPSSNPTYCNDMMKRRNMTQGRCKPVNTFVHEPLVDVQDVCFQENVTCKNGQANCYKSSSSMHITDCRLTNGSRYPNCAYRTSQKERHIIVACEGNPYVPVHFDASVEDST.

Positions 1-28 (MALEKSLALLPLLVLVLLVLGWVQPSLG) are cleaved as a signal peptide. Residues 33–43 (AKKFQRQHMDS) are compositionally biased toward basic and acidic residues. Residues 33–52 (AKKFQRQHMDSDGSPSSNPT) are disordered. Substrate contacts are provided by lysine 35 and arginine 38. The Proton acceptor role is filled by histidine 40. Disulfide bonds link cysteine 54–cysteine 112, cysteine 68–cysteine 123, cysteine 86–cysteine 138, and cysteine 93–cysteine 100. An N-linked (GlcNAc...) asparagine glycan is attached at asparagine 62. A substrate-binding site is contributed by 69–73 (KPVNT). Asparagine 90 carries an N-linked (GlcNAc...) asparagine glycan. Lysine 94 and arginine 113 together coordinate substrate. An N-linked (GlcNAc...) asparagine glycan is attached at asparagine 116. Histidine 147 (proton donor) is an active-site residue.

This sequence belongs to the pancreatic ribonuclease family. Monomer. Interacts with and forms tight 1:1 complexes with RNH1. Dimerization of two such complexes may occur. Interaction with RNH1 inhibits this protein.

It localises to the secreted. The catalysed reaction is an [RNA] containing cytidine + H2O = an [RNA]-3'-cytidine-3'-phosphate + a 5'-hydroxy-ribonucleotide-3'-[RNA].. It carries out the reaction an [RNA] containing uridine + H2O = an [RNA]-3'-uridine-3'-phosphate + a 5'-hydroxy-ribonucleotide-3'-[RNA].. In terms of biological role, endonuclease that catalyzes the cleavage of RNA on the 3' side of pyrimidine nucleotides. Acts on single-stranded and double-stranded RNA. In Ateles geoffroyi (Black-handed spider monkey), this protein is Ribonuclease pancreatic (RNASE1).